The sequence spans 209 residues: Mitotic spindle checkpoint protein MAD2 (209 aa).

The 184-residue stretch at 15 to 198 folds into the HORMA domain; that stretch reads HGSAAIVSEF…TKIHKVDTLV (184 aa).

Belongs to the MAD2 family. In terms of assembly, part of the mitotic checkpoint complex (MCC); interacts with MAD1, CDC20-1, CDC20-2 and CDC20-5. Interacts with BUBR1 at chromocenters and with BUB3.1. Interacts with EIF4B3. Expressed in actively dividing tissues, early in organ development, in young leaves, lateral root primordia and root meristems.

Its subcellular location is the nucleus. It is found in the nucleus envelope. The protein resides in the chromosome. The protein localises to the centromere. It localises to the kinetochore. Its subcellular location is the cytoplasm. It is found in the cytoskeleton. The protein resides in the spindle. Functionally, required for the execution of the mitotic checkpoint which monitors the process of kinetochore-spindle attachment and delays the onset of anaphase when this process is not complete. It inhibits the activity of the anaphase promoting complex by sequestering CDC20 until all chromosomes are aligned at the metaphase plate. The polypeptide is Mitotic spindle checkpoint protein MAD2 (Arabidopsis thaliana (Mouse-ear cress)).